The chain runs to 1877 residues: Protein TIC 214 (1877 aa).

The next 6 helical transmembrane spans lie at 18 to 38 (IINS…FSVG), 64 to 84 (FITG…HLAL), 87 to 107 (PHTI…WKNH), 124 to 144 (LSIQ…HFIL), 172 to 192 (VGWL…LFWI), and 221 to 241 (IFRI…PSPI). 3 disordered regions span residues 246–313 (LKET…GKEK), 644–695 (DDFE…NSDR), and 774–795 (PEFK…QKKE). 3 stretches are compositionally biased toward acidic residues: residues 251 to 268 (ETEE…EIET), 281 to 304 (GSTE…DETE), and 645 to 659 (DFEE…ESTE). Over residues 685-695 (TSTKDTTNSDR) the composition is skewed to basic and acidic residues.

It belongs to the TIC214 family. In terms of assembly, part of the Tic complex.

It localises to the plastid. The protein resides in the chloroplast inner membrane. In terms of biological role, involved in protein precursor import into chloroplasts. May be part of an intermediate translocation complex acting as a protein-conducting channel at the inner envelope. In Chloranthus spicatus (Chulantree), this protein is Protein TIC 214.